The sequence spans 96 residues: SPbeta prophage-derived uncharacterized protein YosV (96 aa).

The protein is SPbeta prophage-derived uncharacterized protein YosV (yosV) of Bacillus subtilis (strain 168).